Reading from the N-terminus, the 229-residue chain is Probable calcium-binding protein CML22 (229 aa).

EF-hand domains follow at residues 53–88 (EGLR…LKLS), 89–124 (LSDE…IYLL), 145–180 (SIFD…EDYP), and 184–219 (SPSH…WVGL). Ca(2+)-binding residues include D66, D68, N70, T72, and E77.

Potential calcium sensor. This Arabidopsis thaliana (Mouse-ear cress) protein is Probable calcium-binding protein CML22 (CML22).